Consider the following 436-residue polypeptide: Protein arginine methyltransferase NDUFAF7, mitochondrial (436 aa).

Residues 1-41 (MNALVRRCVARTGIPSIWRRKCFSSGNEPAESNHVTPMLRH) constitute a mitochondrion transit peptide. The interval 413 to 436 (QGGKACQSEAPSTSVPGFDELVWH) is disordered.

This sequence belongs to the NDUFAF7 family. Interacts with NDUFS2.

It localises to the mitochondrion. It carries out the reaction L-arginyl-[protein] + 2 S-adenosyl-L-methionine = N(omega),N(omega)'-dimethyl-L-arginyl-[protein] + 2 S-adenosyl-L-homocysteine + 2 H(+). Functionally, arginine methyltransferase involved in the assembly or stability of mitochondrial NADH:ubiquinone oxidoreductase complex (complex I). Acts by mediating symmetric dimethylation of 'Arg-118' of NDUFS2 after it assembles into the complex I, stabilizing the early intermediate complex. This is Protein arginine methyltransferase NDUFAF7, mitochondrial from Rattus norvegicus (Rat).